A 346-amino-acid chain; its full sequence is Peroxidase 38 (346 aa).

Residues 1–22 (MHSSLIKLGFLLLLLQVSLSHA) form the signal peptide. Pyrrolidone carboxylic acid is present on Q23. Intrachain disulfides connect C33–C113, C66–C71, C119–C323, and C199–C231. Catalysis depends on H64, which acts as the Proton acceptor. Ca(2+)-binding residues include D65, V68, G70, D72, and S74. N79 carries an N-linked (GlcNAc...) asparagine glycan. P161 contributes to the substrate binding site. H192 is a heme b binding site. Ca(2+) is bound at residue T193. N-linked (GlcNAc...) asparagine glycosylation occurs at N236. 3 residues coordinate Ca(2+): D244, T247, and D252.

It belongs to the peroxidase family. Classical plant (class III) peroxidase subfamily. Heme b serves as cofactor. The cofactor is Ca(2+).

The protein resides in the secreted. Its subcellular location is the vacuole. The catalysed reaction is 2 a phenolic donor + H2O2 = 2 a phenolic radical donor + 2 H2O. Removal of H(2)O(2), oxidation of toxic reductants, biosynthesis and degradation of lignin, suberization, auxin catabolism, response to environmental stresses such as wounding, pathogen attack and oxidative stress. These functions might be dependent on each isozyme/isoform in each plant tissue. The chain is Peroxidase 38 (PER38) from Arabidopsis thaliana (Mouse-ear cress).